The primary structure comprises 727 residues: 1,4-alpha-glucan branching enzyme GlgB (727 aa).

D405 serves as the catalytic Nucleophile. The Proton donor role is filled by E458.

The protein belongs to the glycosyl hydrolase 13 family. GlgB subfamily. In terms of assembly, monomer.

It catalyses the reaction Transfers a segment of a (1-&gt;4)-alpha-D-glucan chain to a primary hydroxy group in a similar glucan chain.. It participates in glycan biosynthesis; glycogen biosynthesis. Its function is as follows. Catalyzes the formation of the alpha-1,6-glucosidic linkages in glycogen by scission of a 1,4-alpha-linked oligosaccharide from growing alpha-1,4-glucan chains and the subsequent attachment of the oligosaccharide to the alpha-1,6 position. The protein is 1,4-alpha-glucan branching enzyme GlgB of Yersinia pseudotuberculosis serotype I (strain IP32953).